Reading from the N-terminus, the 159-residue chain is NADH-quinone oxidoreductase subunit I (159 aa).

4Fe-4S ferredoxin-type domains are found at residues 51–80 and 90–119; these read RRYE…IEAE and TRYD…EGPN. [4Fe-4S] cluster is bound by residues Cys-60, Cys-63, Cys-66, Cys-70, Cys-99, Cys-102, Cys-105, and Cys-109.

Belongs to the complex I 23 kDa subunit family. NDH-1 is composed of 14 different subunits. Subunits NuoA, H, J, K, L, M, N constitute the membrane sector of the complex. [4Fe-4S] cluster is required as a cofactor.

It is found in the cell inner membrane. It catalyses the reaction a quinone + NADH + 5 H(+)(in) = a quinol + NAD(+) + 4 H(+)(out). NDH-1 shuttles electrons from NADH, via FMN and iron-sulfur (Fe-S) centers, to quinones in the respiratory chain. The immediate electron acceptor for the enzyme in this species is believed to be ubiquinone. Couples the redox reaction to proton translocation (for every two electrons transferred, four hydrogen ions are translocated across the cytoplasmic membrane), and thus conserves the redox energy in a proton gradient. This Rickettsia canadensis (strain McKiel) protein is NADH-quinone oxidoreductase subunit I.